Here is a 515-residue protein sequence, read N- to C-terminus: 1-pyrroline-5-carboxylate dehydrogenase (515 aa).

Residues Glu-286 and Cys-320 contribute to the active site.

This sequence belongs to the aldehyde dehydrogenase family. RocA subfamily.

The catalysed reaction is L-glutamate 5-semialdehyde + NAD(+) + H2O = L-glutamate + NADH + 2 H(+). It participates in amino-acid degradation; L-proline degradation into L-glutamate; L-glutamate from L-proline: step 2/2. In Geobacillus thermodenitrificans (strain NG80-2), this protein is 1-pyrroline-5-carboxylate dehydrogenase.